Here is a 290-residue protein sequence, read N- to C-terminus: Ribosomal RNA small subunit methyltransferase A (290 aa).

Asparagine 27, leucine 29, glycine 54, glutamate 75, aspartate 100, and asparagine 125 together coordinate S-adenosyl-L-methionine.

The protein belongs to the class I-like SAM-binding methyltransferase superfamily. rRNA adenine N(6)-methyltransferase family. RsmA subfamily.

It localises to the cytoplasm. The enzyme catalyses adenosine(1518)/adenosine(1519) in 16S rRNA + 4 S-adenosyl-L-methionine = N(6)-dimethyladenosine(1518)/N(6)-dimethyladenosine(1519) in 16S rRNA + 4 S-adenosyl-L-homocysteine + 4 H(+). In terms of biological role, specifically dimethylates two adjacent adenosines (A1518 and A1519) in the loop of a conserved hairpin near the 3'-end of 16S rRNA in the 30S particle. May play a critical role in biogenesis of 30S subunits. The polypeptide is Ribosomal RNA small subunit methyltransferase A (Streptococcus sanguinis (strain SK36)).